A 56-amino-acid polypeptide reads, in one-letter code: Pituitary adenylate cyclase-activating polypeptide (56 aa).

Residues 42–50 (VKKYLAAVL) form an important for receptor binding region. The residue at position 50 (leucine 50) is a Leucine amide.

This sequence belongs to the glucagon family. As to quaternary structure, interacts with ADCYAP1R1 (via N-terminal extracellular domain).

The protein resides in the secreted. In terms of biological role, PACAP is a neuropeptide involved in diverse array of physiological processes through activating the PACAP subfamily of class B1 G protein-coupled receptors: VIP receptor 1 (VIPR1), VIP receptor 2 (VIPR2), and PACAP type I receptor (ADCYAP1R1). Exerts neuroprotective and general cytoprotective effects due to anti-apoptotic, anti-inflammatory, and antioxidant actions. In Heloderma suspectum (Gila monster), this protein is Pituitary adenylate cyclase-activating polypeptide (Adcyap1).